A 663-amino-acid polypeptide reads, in one-letter code: UvrABC system protein B (663 aa).

Residues 1-10 are compositionally biased toward basic and acidic residues; it reads MIDKRDDKPF. Residues 1-23 are disordered; that stretch reads MIDKRDDKPFKLKSKYKPSGDQP. A Helicase ATP-binding domain is found at 31–418; the sequence is DNIEGGEKAQ…TNTIIEQIIR (388 aa). 44–51 contacts ATP; the sequence is GATGTGKT. Residues 97–120 carry the Beta-hairpin motif; sequence YYDYYQPEAYVPSSDTYIEKDSSV. Residues 435–601 enclose the Helicase C-terminal domain; it reads QMDDLLGEIN…TIKKDIRGLI (167 aa). One can recognise a UVR domain in the interval 627 to 662; it reads KEAINALQKQMQEAAELLDFELAAQMRDLILELKLM.

The protein belongs to the UvrB family. In terms of assembly, forms a heterotetramer with UvrA during the search for lesions. Interacts with UvrC in an incision complex.

The protein localises to the cytoplasm. Functionally, the UvrABC repair system catalyzes the recognition and processing of DNA lesions. A damage recognition complex composed of 2 UvrA and 2 UvrB subunits scans DNA for abnormalities. Upon binding of the UvrA(2)B(2) complex to a putative damaged site, the DNA wraps around one UvrB monomer. DNA wrap is dependent on ATP binding by UvrB and probably causes local melting of the DNA helix, facilitating insertion of UvrB beta-hairpin between the DNA strands. Then UvrB probes one DNA strand for the presence of a lesion. If a lesion is found the UvrA subunits dissociate and the UvrB-DNA preincision complex is formed. This complex is subsequently bound by UvrC and the second UvrB is released. If no lesion is found, the DNA wraps around the other UvrB subunit that will check the other stand for damage. This is UvrABC system protein B from Streptococcus pyogenes serotype M1.